Here is a 392-residue protein sequence, read N- to C-terminus: NADH-quinone oxidoreductase subunit D (392 aa).

This sequence belongs to the complex I 49 kDa subunit family. NDH-1 is composed of 14 different subunits. Subunits NuoB, C, D, E, F, and G constitute the peripheral sector of the complex.

It is found in the cell inner membrane. It carries out the reaction a quinone + NADH + 5 H(+)(in) = a quinol + NAD(+) + 4 H(+)(out). Functionally, NDH-1 shuttles electrons from NADH, via FMN and iron-sulfur (Fe-S) centers, to quinones in the respiratory chain. The immediate electron acceptor for the enzyme in this species is believed to be ubiquinone. Couples the redox reaction to proton translocation (for every two electrons transferred, four hydrogen ions are translocated across the cytoplasmic membrane), and thus conserves the redox energy in a proton gradient. In Rhodospirillum rubrum (strain ATCC 11170 / ATH 1.1.1 / DSM 467 / LMG 4362 / NCIMB 8255 / S1), this protein is NADH-quinone oxidoreductase subunit D.